A 673-amino-acid polypeptide reads, in one-letter code: DNA ligase (673 aa).

Residues Asp-35 to Asp-39, Ser-84 to Leu-85, and Glu-115 each bind NAD(+). Lys-117 acts as the N6-AMP-lysine intermediate in catalysis. Arg-138, Glu-180, Lys-296, and Lys-320 together coordinate NAD(+). Zn(2+) is bound by residues Cys-415, Cys-418, Cys-433, and Cys-438. Residues Glu-595–Lys-673 enclose the BRCT domain.

Belongs to the NAD-dependent DNA ligase family. LigA subfamily. Mg(2+) serves as cofactor. The cofactor is Mn(2+).

The catalysed reaction is NAD(+) + (deoxyribonucleotide)n-3'-hydroxyl + 5'-phospho-(deoxyribonucleotide)m = (deoxyribonucleotide)n+m + AMP + beta-nicotinamide D-nucleotide.. DNA ligase that catalyzes the formation of phosphodiester linkages between 5'-phosphoryl and 3'-hydroxyl groups in double-stranded DNA using NAD as a coenzyme and as the energy source for the reaction. It is essential for DNA replication and repair of damaged DNA. The chain is DNA ligase from Koribacter versatilis (strain Ellin345).